The sequence spans 596 residues: Deuterosome assembly protein 1 (596 aa).

3 coiled-coil regions span residues 8 to 68, 130 to 180, and 227 to 284; these read IARN…NHEI, CELQ…FQKE, and IENL…DLLR. The span at 297–306 shows a compositional bias: polar residues; sequence TANLANQKTA. Residues 297–316 form a disordered region; the sequence is TANLANQKTAQGEEASFQVT. Positions 337 to 402 form a coiled coil; sequence SEKYQAENDL…LKGAQNRQTS (66 aa). Residues 447–467 are disordered; the sequence is DKPQKHRSFHGENNSLKPTNY. The span at 457 to 467 shows a compositional bias: polar residues; the sequence is GENNSLKPTNY.

It belongs to the CEP63 family.

It localises to the cytoplasm. In terms of biological role, key structural component of the deuterosome, a structure that promotes de novo centriole amplification in multiciliated cells. Deuterosome-mediated centriole amplification occurs in terminally differentiated multiciliated cells and can generate more than 100 centrioles. Probably sufficient for the specification and formation of the deuterosome inner core. The protein is Deuterosome assembly protein 1 of Xenopus tropicalis (Western clawed frog).